Reading from the N-terminus, the 526-residue chain is MTKIERALISVSDKTGILEFARGLAAHGVEILSTGGTAKLLADNNVPVIEVADYTGFPEMLDGRVKTLHPKIHGGILGRRDLPEHVAKMAEHGIGNIDLVCVNLYPFEATIAKEGCALEDAIENIDIGGPTMVRSAAKNWAHVAIVTDAADYPALLEEMGANAGALSRATRFDLSRKAFTHTAAYDGAISNYLTAVQADQGLAGEPVRTLFPTRLNLQVVKVQDMRYGENPHQSAAFYRDLDPAPGTLAHYRQLQGKELSYNNIADSDAAWEAVKTFDDPACVIVKHANPCGVAVAADPLSAYRLAFATDTTSAFGGIIAFNREVDAATVEAVSAQFLEVLIAPAFTDDAKALIAAKKNVRVLEVPVEAGANRFELKRVGGGLLVQTPDIKNVTLDELKVVTKAQPTRQQLADLLFAWRVAKFVKSNAIVFAAGGQTAGIGAGQMSRVDSTRIAARKAQDAGLSLKNAVAASDAFFPFRDGVDVIAEQGISAIIQPGGSMRDEEVIKAADEHGIAMVFTGNRHFRH.

The MGS-like domain occupies 1-147; that stretch reads MTKIERALIS…KNWAHVAIVT (147 aa).

It belongs to the PurH family.

It catalyses the reaction (6R)-10-formyltetrahydrofolate + 5-amino-1-(5-phospho-beta-D-ribosyl)imidazole-4-carboxamide = 5-formamido-1-(5-phospho-D-ribosyl)imidazole-4-carboxamide + (6S)-5,6,7,8-tetrahydrofolate. The enzyme catalyses IMP + H2O = 5-formamido-1-(5-phospho-D-ribosyl)imidazole-4-carboxamide. The protein operates within purine metabolism; IMP biosynthesis via de novo pathway; 5-formamido-1-(5-phospho-D-ribosyl)imidazole-4-carboxamide from 5-amino-1-(5-phospho-D-ribosyl)imidazole-4-carboxamide (10-formyl THF route): step 1/1. It functions in the pathway purine metabolism; IMP biosynthesis via de novo pathway; IMP from 5-formamido-1-(5-phospho-D-ribosyl)imidazole-4-carboxamide: step 1/1. The chain is Bifunctional purine biosynthesis protein PurH from Laribacter hongkongensis (strain HLHK9).